Consider the following 122-residue polypeptide: Large ribosomal subunit protein bL20c (122 aa).

It belongs to the bacterial ribosomal protein bL20 family.

Its subcellular location is the plastid. The protein resides in the chloroplast. In terms of biological role, binds directly to 23S ribosomal RNA and is necessary for the in vitro assembly process of the 50S ribosomal subunit. It is not involved in the protein synthesizing functions of that subunit. This chain is Large ribosomal subunit protein bL20c, found in Dioscorea elephantipes (Elephant's foot yam).